A 91-amino-acid chain; its full sequence is Small ribosomal subunit protein uS19 (91 aa).

This sequence belongs to the universal ribosomal protein uS19 family.

Functionally, protein S19 forms a complex with S13 that binds strongly to the 16S ribosomal RNA. This is Small ribosomal subunit protein uS19 from Parasynechococcus marenigrum (strain WH8102).